Here is a 475-residue protein sequence, read N- to C-terminus: Methylenetetrahydrofolate--tRNA-(uracil-5-)-methyltransferase TrmFO (475 aa).

FAD is bound at residue 13–18 (GAGLAG).

The protein belongs to the MnmG family. TrmFO subfamily. FAD is required as a cofactor.

It is found in the cytoplasm. It carries out the reaction uridine(54) in tRNA + (6R)-5,10-methylene-5,6,7,8-tetrahydrofolate + NADH + H(+) = 5-methyluridine(54) in tRNA + (6S)-5,6,7,8-tetrahydrofolate + NAD(+). The enzyme catalyses uridine(54) in tRNA + (6R)-5,10-methylene-5,6,7,8-tetrahydrofolate + NADPH + H(+) = 5-methyluridine(54) in tRNA + (6S)-5,6,7,8-tetrahydrofolate + NADP(+). In terms of biological role, catalyzes the folate-dependent formation of 5-methyl-uridine at position 54 (M-5-U54) in all tRNAs. This chain is Methylenetetrahydrofolate--tRNA-(uracil-5-)-methyltransferase TrmFO, found in Bradyrhizobium diazoefficiens (strain JCM 10833 / BCRC 13528 / IAM 13628 / NBRC 14792 / USDA 110).